A 268-amino-acid chain; its full sequence is Regulatory protein zeste (268 aa).

A DNA-binding region spans residues 1–72; it reads TAEEKEVLYT…WLNSRLRKQY (72 aa). Residues 94 to 108 are compositionally biased toward low complexity; the sequence is VSVASAVPQQQQQQH. The segment at 94 to 133 is disordered; that stretch reads VSVASAVPQQQQQQHHQQHDNVKEEPEYQISPDASEHNPQ. A compositionally biased stretch (basic and acidic residues) spans 110–119; the sequence is QQHDNVKEEP.

Self-associates forming complexes of several hundred monomers.

Its subcellular location is the nucleus. In terms of biological role, involved in transvection phenomena (= synapsis-dependent gene expression), where the synaptic pairing of chromosomes carrying genes with which zeste interacts influences the expression of these genes. Zeste binds to DNA and stimulates transcription from a nearby promoter. The polypeptide is Regulatory protein zeste (z) (Drosophila sechellia (Fruit fly)).